Consider the following 410-residue polypeptide: Transcription factor Dp-1 (410 aa).

N6-acetyllysine is present on Lys-3. Residue Ser-23 is modified to Phosphoserine; by CDK2. The interval 77-114 is disordered; that stretch reads VVGSPHTPNTHFVSQNQPSDPSPWSAGKRNRKGEKNGK. The span at 82-95 shows a compositional bias: polar residues; sequence HTPNTHFVSQNQPS. The span at 104–114 shows a compositional bias: basic residues; that stretch reads KRNRKGEKNGK. Positions 105–127 are interaction with CEBPA; the sequence is RNRKGEKNGKGLRHFSMKVCEKV. Residues 113-195 mediate DNA binding; the sequence is GKGLRHFSMK…KKEIKWIGLP (83 aa). The short motif at 161 to 195 is the DEF box element; it reads DQKNIRRRVYDALNVLMAMNIISKEKKEIKWIGLP. The interval 204–277 is dimerization; it reads SLEVERQRRL…KKTVIDCSIS (74 aa). Residues 211 to 327 form an enhances binding of RB protein to E2F region; it reads RRLERIKQKQ…DLRVARSLVP (117 aa). The interval 214-246 is DCB1; it reads ERIKQKQSQLQELILQQIAFKNLVQRNRQVEQQ. Residues 259–315 are DCB2; it reads LPFIIVNTSKKTVIDCSISNDKFEYLFNFDNTFEIHDDIEVLKRMGMACGLESGSCS. Residues 370–410 form a disordered region; that stretch reads GALATSSSGSQYSGSRVETPVSCVGEDDEDDEDFNENEEED. Over residues 375–384 the composition is skewed to low complexity; sequence SSSGSQYSGS. A compositionally biased stretch (acidic residues) spans 394–410; the sequence is GEDDEDDEDFNENEEED.

This sequence belongs to the E2F/DP family. In terms of assembly, component of the E2F:DP transcription factor complex. Forms heterodimers with E2F family members. The complex can interact with hypophosphorylated retinoblastoma protein RB1 and related proteins (RBL1 and RBL2) that inhibit the E2F transactivation domain. This repression involves recruitment of histone deacetylase (HDAC). During the cell cycle, from mid-to-late G1 phase, RB family members become phosphorylated, detach from the DRTF1/E2F complex to render E2F transcriptionally active. Part of the E2F6.com-1 complex in G0 phase is composed of E2F6, MGA, MAX, TFDP1, CBX3, BAT8, EUHMTASE1, RING1, RNF2, MBLR, L3MBTL2 YAF2. Component of the DREAM complex (also named LINC complex) at least composed of E2F4, E2F5, LIN9, LIN37, LIN52, LIN54, MYBL1, MYBL2, RBL1, RBL2, RBBP4, TFDP1 and TFDP2. The complex exists in quiescent cells where it represses cell cycle-dependent genes. It dissociates in S phase when LIN9, LIN37, LIN52 and LIN54 form a subcomplex that binds to MYBL2. The complex TFDP1:E2F1 interacts with CEBPA; the interaction prevents CEBPA binding to target gene promoters and represses its transcriptional activity. Post-translationally, ubiquitinated by the BCR(KBTBD5) complex, leading to its subsequent degradation. In terms of processing, phosphorylation by E2F1-bound cyclin A-CDK2, in the S phase, inhibits E2F-mediated DNA binding and transactivation.

It is found in the nucleus. Its subcellular location is the cytoplasm. Its function is as follows. Can stimulate E2F-dependent transcription. Binds DNA cooperatively with E2F family members through the E2 recognition site, 5'-TTTC[CG]CGC-3', found in the promoter region of a number of genes whose products are involved in cell cycle regulation or in DNA replication. The E2F1:DP complex appears to mediate both cell proliferation and apoptosis. Blocks adipocyte differentiation by repressing CEBPA binding to its target gene promoters. The chain is Transcription factor Dp-1 (TFDP1) from Bos taurus (Bovine).